Reading from the N-terminus, the 949-residue chain is Zinc finger CCHC domain-containing protein 14 (949 aa).

6 disordered regions span residues 25–44, 59–92, 200–221, 236–262, 355–457, and 739–779; these read SSLN…PGGA, EAPV…LGKH, STSS…LSKV, AGIP…LPHC, KEKS…DKEK, and PESS…PQPA. Residues 28–43 are compositionally biased toward gly residues; that stretch reads NGGGGHGGKGAPGPGG. Residues 61-78 show a composition bias toward polar residues; it reads PVSSVSNSLENALHTSAH. Low complexity predominate over residues 200–219; sequence STSSPPQQLQSPSPGNPSLS. Residues 395–411 are compositionally biased toward basic and acidic residues; sequence HAAELRVEVEQPHHQLP. A compositionally biased stretch (low complexity) spans 416 to 425; that stretch reads SSEYSSSSSS. The span at 431–457 shows a compositional bias: basic and acidic residues; sequence AREESSDSAEENDRRVEIHLESSDKEK. The CCHC-type zinc-finger motif lies at 906–923; it reads LSCYNCGATGHRAQDCKQ.

The chain is Zinc finger CCHC domain-containing protein 14 (ZCCHC14) from Homo sapiens (Human).